Here is a 92-residue protein sequence, read N- to C-terminus: Small ribosomal subunit protein uS19c (92 aa).

Belongs to the universal ribosomal protein uS19 family.

It is found in the plastid. The protein resides in the chloroplast. Protein S19 forms a complex with S13 that binds strongly to the 16S ribosomal RNA. This is Small ribosomal subunit protein uS19c from Psilotum nudum (Whisk fern).